The primary structure comprises 123 residues: UPF0102 protein Dole_2298 (123 aa).

This sequence belongs to the UPF0102 family.

This Desulfosudis oleivorans (strain DSM 6200 / JCM 39069 / Hxd3) (Desulfococcus oleovorans) protein is UPF0102 protein Dole_2298.